Reading from the N-terminus, the 155-residue chain is S-ribosylhomocysteine lyase (155 aa).

Histidine 58, histidine 62, and cysteine 125 together coordinate Fe cation.

It belongs to the LuxS family. Homodimer. Fe cation is required as a cofactor.

It carries out the reaction S-(5-deoxy-D-ribos-5-yl)-L-homocysteine = (S)-4,5-dihydroxypentane-2,3-dione + L-homocysteine. In terms of biological role, involved in the synthesis of autoinducer 2 (AI-2) which is secreted by bacteria and is used to communicate both the cell density and the metabolic potential of the environment. The regulation of gene expression in response to changes in cell density is called quorum sensing. Catalyzes the transformation of S-ribosylhomocysteine (RHC) to homocysteine (HC) and 4,5-dihydroxy-2,3-pentadione (DPD). This is S-ribosylhomocysteine lyase from Chromohalobacter salexigens (strain ATCC BAA-138 / DSM 3043 / CIP 106854 / NCIMB 13768 / 1H11).